Consider the following 314-residue polypeptide: Polyamine aminopropyltransferase (314 aa).

The PABS domain maps to 13 to 249; it reads WSWFLEWLTP…SMWGFVVASD (237 aa). Q42 serves as a coordination point for S-methyl-5'-thioadenosine. Spermidine-binding residues include H73 and E97. S-methyl-5'-thioadenosine is bound by residues D117 and 149–150; that span reads DA. Residue D168 is the Proton acceptor of the active site. P177 is an S-methyl-5'-thioadenosine binding site.

This sequence belongs to the spermidine/spermine synthase family. Homodimer or homotetramer.

The protein resides in the cytoplasm. It catalyses the reaction S-adenosyl 3-(methylsulfanyl)propylamine + putrescine = S-methyl-5'-thioadenosine + spermidine + H(+). It participates in amine and polyamine biosynthesis; spermidine biosynthesis; spermidine from putrescine: step 1/1. In terms of biological role, catalyzes the irreversible transfer of a propylamine group from the amino donor S-adenosylmethioninamine (decarboxy-AdoMet) to putrescine (1,4-diaminobutane) to yield spermidine. This Aeropyrum pernix (strain ATCC 700893 / DSM 11879 / JCM 9820 / NBRC 100138 / K1) protein is Polyamine aminopropyltransferase.